The following is a 302-amino-acid chain: UPF0761 membrane protein Tola_0461 (302 aa).

6 helical membrane passes run 51-71 (YVSLLSIVPLLAVVFSVLSWL), 111-131 (TTSIGLLMLVLLALLLIAAID), 150-170 (ITMYSIVLGVVPLLVGGSLLL), 188-208 (LGGGLLELLPYLLSLGGILLL), 222-242 (ALLGATLAALLFEVAKEGFGY), and 256-276 (ALAGIPILMIWLYMSWLVVLL).

This sequence belongs to the UPF0761 family.

It localises to the cell inner membrane. The chain is UPF0761 membrane protein Tola_0461 from Tolumonas auensis (strain DSM 9187 / NBRC 110442 / TA 4).